A 164-amino-acid chain; its full sequence is R-phycoerythrin alpha chain (164 aa).

(2R,3E)-phycoerythrobilin is bound by residues Asn47, Lys81, Cys82, Arg84, His88, Arg137, Cys139, and Arg142.

Belongs to the phycobiliprotein family. In terms of assembly, heterododecamer of 6 alpha and 6 beta chains. The basic functional unit of phycobiliproteins is a ring-shaped hexamer formed from two back-to-back trimers contacting via the alpha chain subunits. The trimers are composed of alpha/beta subunit heterodimers arranged around a three-fold axis of symmetry. The phycoerythrins also contain a gamma subunit which is located in the center of the hexamer. Post-translationally, contains two covalently linked phycoerythrobilin chromophores. In PubMed:8876649 the authors refer to the bilins as phycoerythrobilins. In the PDB entries, the bilins are named as phycocyanobilins although the modeled compounds correspond to phycoerythrobilins.

The protein localises to the plastid. The protein resides in the chloroplast thylakoid membrane. Light-harvesting photosynthetic tetrapyrrole chromophore-protein from the phycobiliprotein complex. The chain is R-phycoerythrin alpha chain (cpeA) from Polysiphonia urceolata (Red alga).